A 1569-amino-acid polypeptide reads, in one-letter code: Zinc finger protein GLI3 (1569 aa).

2 stretches are compositionally biased toward polar residues: residues 1-10 and 416-432; these read MEAQSRSTTA and AAQQ…SSTG. Disordered stretches follow at residues 1-79 and 414-461; these read MEAQ…STSS and SEAA…DQPD. C2H2-type zinc fingers lie at residues 485–510, 518–545, 551–575, 581–606, and 612–637; these read TNCH…NNDH, FVCR…MRRH, HKCT…LRSH, YVCE…NRTH, and YVCK…KTVH. Disordered regions lie at residues 625 to 731, 899 to 921, 1202 to 1228, and 1335 to 1364; these read DPSS…YTNS, SYDP…DGLP, PKSG…QNLD, and SNQT…GEQQ. A compositionally biased stretch (basic and acidic residues) spans 637-653; that stretch reads HGPEAHVTKKQRGDIHP. Residues 663–676 show a composition bias toward polar residues; that stretch reads SHSQSRSPGQQTQG. Over residues 678–704 the composition is skewed to basic and acidic residues; the sequence is HGEHKDLSNTTSKHEECLQVRSVKTEK. Residues 705 to 731 are compositionally biased toward polar residues; the sequence is PMSSQPSPGGKSSCSRQQSPISNYTNS. Positions 1335–1350 are enriched in low complexity; the sequence is SNQTTSGQNGNTTDGT. Positions 1352–1364 are enriched in polar residues; that stretch reads SFLSTTQNGGEQQ.

It belongs to the GLI C2H2-type zinc-finger protein family. Phosphorylation is essential for its proteolytic processing. Post-translationally, the repressor form (GLI3R), a C-terminally truncated form is generated from the full-length GLI3 protein (GLI3FL) through proteolytic processing.

The protein resides in the nucleus. The protein localises to the cytoplasm. In terms of biological role, has a dual function as a transcriptional activator and a repressor of the sonic hedgehog (Shh) pathway, and may play a role in limb development. May bind to the minimal GLI-consensus sequence 5'-GGGTGGTC-3'. Has an essential role in the early embryonic patterning of mesoderm and neuroectoderm. The polypeptide is Zinc finger protein GLI3 (gli3) (Xenopus laevis (African clawed frog)).